We begin with the raw amino-acid sequence, 291 residues long: ATP synthase gamma chain (291 aa).

Belongs to the ATPase gamma chain family. F-type ATPases have 2 components, CF(1) - the catalytic core - and CF(0) - the membrane proton channel. CF(1) has five subunits: alpha(3), beta(3), gamma(1), delta(1), epsilon(1). CF(0) has three main subunits: a, b and c.

The protein resides in the cell membrane. Its function is as follows. Produces ATP from ADP in the presence of a proton gradient across the membrane. The gamma chain is believed to be important in regulating ATPase activity and the flow of protons through the CF(0) complex. The polypeptide is ATP synthase gamma chain (Buchnera aphidicola subsp. Schizaphis graminum (strain Sg)).